The primary structure comprises 133 residues: Nickel-responsive regulator (133 aa).

Residues H76, H87, H89, and C95 each contribute to the Ni(2+) site.

Belongs to the transcriptional regulatory CopG/NikR family. As to quaternary structure, homotetramer. The cofactor is Ni(2+).

Its function is as follows. Transcriptional repressor of the nikABCDE operon. Is active in the presence of excessive concentrations of intracellular nickel. This is Nickel-responsive regulator from Salmonella paratyphi A (strain ATCC 9150 / SARB42).